A 558-amino-acid chain; its full sequence is Atlastin-1 (558 aa).

The interval methionine 1–proline 28 is disordered. The segment at methionine 1–proline 34 is N-terminal hypervariable region (HVR). Residues methionine 1 to alanine 449 lie on the Cytoplasmic side of the membrane. Phosphoserine is present on residues serine 10, serine 22, and serine 23. One can recognise a GB1/RHD3-type G domain in the interval aspartate 64–serine 309. GDP-binding residues include arginine 77, lysine 78, glycine 79, lysine 80, serine 81, phenylalanine 82, glutamine 148, arginine 217, aspartate 218, valine 276, and asparagine 279. GTP contacts are provided by arginine 77, lysine 78, glycine 79, lysine 80, serine 81, and phenylalanine 82. Serine 81 lines the Mg(2+) pocket. GTP is bound by residues arginine 217, aspartate 218, and valine 276. Residues methionine 347–serine 438 form a 3HB (three-helix bundle) domain region. Position 395 is an N6-acetyllysine (lysine 395). A coiled-coil region spans residues leucine 418–lysine 439. The linker stretch occupies residues lysine 439–threonine 447. Residues threonine 450–leucine 470 traverse the membrane as a helical segment. Position 471 (aspartate 471) is a topological domain, lumenal. Residues isoleucine 472–alanine 492 traverse the membrane as a helical segment. The Cytoplasmic segment spans residues tyrosine 493 to methionine 558. The segment at asparagine 521 to methionine 558 is autoinhibitory domain.

The protein belongs to the TRAFAC class dynamin-like GTPase superfamily. GB1/RHD3 GTPase family. GB1 subfamily. As to quaternary structure, monomeric and homodimeric. The homodimer, transiently formed by two molecules on opposing membranes, is the active form mediating ER membrane fusion. Interacts with REEP1, REEP5, RTN3 and RTN4 (via the transmembrane region); these proteins are involved in endoplasmic reticulum tubular network organization. Interacts with ZFYVE27; both proteins are involved in endoplasmic reticulum tubular network organization. Interacts with ARL6IP1; both proteins are involved in endoplasmic reticulum tubular network organization. Interacts with SPAST; the interaction is direct, could recruit SPAST to Golgi membranes. Interacts (via N-terminal region) with MAP4K4 (via CNH regulatory domain). May interact with TMED2. Interacts with CPT1C. In terms of processing, phosphorylated. Phosphorylation, by different kinases, of the N-terminal hypervariable region (HVR) regulates the ATL1-mediated membrane tethering step.

The protein localises to the endoplasmic reticulum membrane. It is found in the golgi apparatus membrane. The protein resides in the cell projection. It localises to the axon. It carries out the reaction GTP + H2O = GDP + phosphate + H(+). Functionally, atlastin-1 (ATL1) is a membrane-anchored GTPase that mediates the GTP-dependent fusion of endoplasmic reticulum (ER) membranes, maintaining the continuous ER network. It facilitates the formation of three-way junctions where ER tubules intersect. Two atlastin-1 on neighboring ER tubules bind GTP and form loose homodimers through the GB1/RHD3-type G domains and 3HB regions. Upon GTP hydrolysis, the 3HB regions tighten, pulling the membranes together to drive their fusion. After fusion, the homodimer disassembles upon release of inorganic phosphate (Pi). Subsequently, GDP dissociates, resetting the monomers to a conformation ready for a new fusion cycle. May also regulate more or less directly Golgi biogenesis. Indirectly regulates axonal development. The polypeptide is Atlastin-1 (Bos taurus (Bovine)).